A 394-amino-acid polypeptide reads, in one-letter code: Probable fimbrial assembly protein FimD, serogroup H1 (394 aa).

This Dichelobacter nodosus (Bacteroides nodosus) protein is Probable fimbrial assembly protein FimD, serogroup H1 (fimD).